The primary structure comprises 265 residues: Type III pantothenate kinase (265 aa).

6 to 13 lines the ATP pocket; sequence DVGNTNIV. Substrate contacts are provided by residues Tyr-100 and 107–110; that span reads GADR. The active-site Proton acceptor is the Asp-109. Asp-129 contributes to the K(+) binding site. Residue Thr-132 coordinates ATP. Thr-184 is a substrate binding site.

The protein belongs to the type III pantothenate kinase family. Homodimer. It depends on NH4(+) as a cofactor. The cofactor is K(+).

The protein resides in the cytoplasm. It catalyses the reaction (R)-pantothenate + ATP = (R)-4'-phosphopantothenate + ADP + H(+). It participates in cofactor biosynthesis; coenzyme A biosynthesis; CoA from (R)-pantothenate: step 1/5. Functionally, catalyzes the phosphorylation of pantothenate (Pan), the first step in CoA biosynthesis. The chain is Type III pantothenate kinase from Alkaliphilus oremlandii (strain OhILAs) (Clostridium oremlandii (strain OhILAs)).